We begin with the raw amino-acid sequence, 165 residues long: Shikimate kinase (165 aa).

ATP is bound at residue 11-16 (GAGKTT). Residue Thr-15 coordinates Mg(2+). Substrate contacts are provided by Asp-33, Arg-57, and Gly-78. Arg-116 provides a ligand contact to ATP. Arg-134 is a binding site for substrate.

Belongs to the shikimate kinase family. In terms of assembly, monomer. Mg(2+) serves as cofactor.

The protein resides in the cytoplasm. The catalysed reaction is shikimate + ATP = 3-phosphoshikimate + ADP + H(+). It functions in the pathway metabolic intermediate biosynthesis; chorismate biosynthesis; chorismate from D-erythrose 4-phosphate and phosphoenolpyruvate: step 5/7. In terms of biological role, catalyzes the specific phosphorylation of the 3-hydroxyl group of shikimic acid using ATP as a cosubstrate. This is Shikimate kinase from Bacillus cereus (strain AH187).